A 1007-amino-acid chain; its full sequence is uncharacterized protein (1007 aa).

The first 51 residues, 1-51 (MTTPISNSPSSIPTVTVSTTTASSGSLGTSTVSSTTTSTSVAQTATTTSSA), serve as a signal peptide directing secretion. Over residues 1-96 (MTTPISNSPS…SATANKTSSA (96 aa)) the composition is skewed to low complexity. 7 disordered regions span residues 1-186 (MTTP…GNPI), 200-224 (TYTT…MSLP), 387-533 (NWGS…GPDI), 543-562 (TVYP…ANQN), 578-645 (ETII…GPDI), 655-674 (TVYP…ANQN), and 712-757 (DLED…GPDI). The span at 118–163 (DGEVSSNYDDVDTPTNSSDSTVDSDYQDVETQYKTISNNGENTYET) shows a compositional bias: polar residues. Over residues 167 to 176 (HGEKNTHVQE) the composition is skewed to basic and acidic residues. Polar residues-rich tracts occupy residues 177–186 (SHASGTGNPI) and 200–210 (TYTTSPRNENI). Residues 423–442 (VINVNVNVGGTNVNIGDTNV) are compositionally biased toward low complexity. Over residues 443 to 453 (SKGSGTPTSSQ) the composition is skewed to polar residues. Positions 469-491 (IDTNNQTNGDINTNDNSNNVDGS) are enriched in low complexity. The span at 507–523 (DTESTNGNDSGKTTSTE) shows a compositional bias: polar residues. Positions 597-618 (ADADVEDTSDTDSGIGDDDGVS) are enriched in acidic residues. Residues 619-635 (DTESTNGNNSGKTTSTE) are compositionally biased toward low complexity. A compositionally biased stretch (acidic residues) spans 712-730 (DLEDVSDADSGFGDDDGIS). A compositionally biased stretch (polar residues) spans 732 to 743 (TESTNGNDSGKN).

The protein belongs to the chlamydial CPn_0572/CT_456/TC_0741 family.

This is an uncharacterized protein from Chlamydia muridarum (strain MoPn / Nigg).